The following is a 56-amino-acid chain: Small ribosomal subunit protein uS14 (56 aa).

Zn(2+)-binding residues include C21, C24, C39, and C42.

It belongs to the universal ribosomal protein uS14 family. Component of the small ribosomal subunit (SSU). Mature N.crassa ribosomes consist of a small (40S) and a large (60S) subunit. The 40S small subunit contains 1 molecule of ribosomal RNA (18S rRNA) and at least 32 different proteins. The large 60S subunit contains 3 rRNA molecules (26S, 5.8S and 5S rRNA) and at least 42 different proteins. Zn(2+) is required as a cofactor.

The protein localises to the cytoplasm. Functionally, component of the ribosome, a large ribonucleoprotein complex responsible for the synthesis of proteins in the cell. The small ribosomal subunit (SSU) binds messenger RNAs (mRNAs) and translates the encoded message by selecting cognate aminoacyl-transfer RNA (tRNA) molecules. The large subunit (LSU) contains the ribosomal catalytic site termed the peptidyl transferase center (PTC), which catalyzes the formation of peptide bonds, thereby polymerizing the amino acids delivered by tRNAs into a polypeptide chain. The nascent polypeptides leave the ribosome through a tunnel in the LSU and interact with protein factors that function in enzymatic processing, targeting, and the membrane insertion of nascent chains at the exit of the ribosomal tunnel. In Neurospora crassa (strain ATCC 24698 / 74-OR23-1A / CBS 708.71 / DSM 1257 / FGSC 987), this protein is Small ribosomal subunit protein uS14 (rps-29).